Consider the following 615-residue polypeptide: DNA mismatch repair protein MutL (615 aa).

The disordered stretch occupies residues 363–397 (FAEPAAREPVAPRYTPAPASGSRPAAPWPNAQPGY). A compositionally biased stretch (low complexity) spans 364–391 (AEPAAREPVAPRYTPAPASGSRPAAPWP).

It belongs to the DNA mismatch repair MutL/HexB family.

In terms of biological role, this protein is involved in the repair of mismatches in DNA. It is required for dam-dependent methyl-directed DNA mismatch repair. May act as a 'molecular matchmaker', a protein that promotes the formation of a stable complex between two or more DNA-binding proteins in an ATP-dependent manner without itself being part of a final effector complex. This is DNA mismatch repair protein MutL from Escherichia coli (strain K12 / MC4100 / BW2952).